The sequence spans 418 residues: Tyrosine--tRNA ligase (418 aa).

Position 39 (Y39) interacts with L-tyrosine. The 'HIGH' region motif lies at 44-53; it reads CTAASLHVGH. L-tyrosine contacts are provided by Y176 and Q180. The short motif at 236–240 is the 'KMSKS' region element; that stretch reads KMGKT. Residue K239 participates in ATP binding. The S4 RNA-binding domain maps to 350–418; the sequence is IGVLVAFAEK…KKKHVLLRLA (69 aa).

Belongs to the class-I aminoacyl-tRNA synthetase family. TyrS type 1 subfamily. Homodimer.

It localises to the cytoplasm. The enzyme catalyses tRNA(Tyr) + L-tyrosine + ATP = L-tyrosyl-tRNA(Tyr) + AMP + diphosphate + H(+). Functionally, catalyzes the attachment of tyrosine to tRNA(Tyr) in a two-step reaction: tyrosine is first activated by ATP to form Tyr-AMP and then transferred to the acceptor end of tRNA(Tyr). In Rhodopseudomonas palustris (strain ATCC BAA-98 / CGA009), this protein is Tyrosine--tRNA ligase.